Consider the following 581-residue polypeptide: uncharacterized protein (581 aa).

This is an uncharacterized protein from Borreliella burgdorferi (strain ATCC 35210 / DSM 4680 / CIP 102532 / B31) (Borrelia burgdorferi).